The chain runs to 440 residues: UDP-N-acetylmuramoylalanine--D-glutamate ligase (440 aa).

Residue 115–121 (GSNGKST) coordinates ATP.

This sequence belongs to the MurCDEF family.

Its subcellular location is the cytoplasm. The enzyme catalyses UDP-N-acetyl-alpha-D-muramoyl-L-alanine + D-glutamate + ATP = UDP-N-acetyl-alpha-D-muramoyl-L-alanyl-D-glutamate + ADP + phosphate + H(+). It functions in the pathway cell wall biogenesis; peptidoglycan biosynthesis. Functionally, cell wall formation. Catalyzes the addition of glutamate to the nucleotide precursor UDP-N-acetylmuramoyl-L-alanine (UMA). This chain is UDP-N-acetylmuramoylalanine--D-glutamate ligase, found in Vibrio cholerae serotype O1 (strain ATCC 39315 / El Tor Inaba N16961).